The sequence spans 239 residues: Tryptophan synthase alpha chain (239 aa).

Active-site proton acceptor residues include Glu34 and Asp45.

The protein belongs to the TrpA family. As to quaternary structure, tetramer of two alpha and two beta chains.

It catalyses the reaction (1S,2R)-1-C-(indol-3-yl)glycerol 3-phosphate + L-serine = D-glyceraldehyde 3-phosphate + L-tryptophan + H2O. It participates in amino-acid biosynthesis; L-tryptophan biosynthesis; L-tryptophan from chorismate: step 5/5. Functionally, the alpha subunit is responsible for the aldol cleavage of indoleglycerol phosphate to indole and glyceraldehyde 3-phosphate. The polypeptide is Tryptophan synthase alpha chain (Thermotoga petrophila (strain ATCC BAA-488 / DSM 13995 / JCM 10881 / RKU-1)).